The sequence spans 1061 residues: MPNEGIPHSSQTQEQDCLQSQPVSNNEEMAIKQESGGDGEVEEYLSFRSVGDGLSTSAVGCASAAPRRGPALLHIDRHQIQAVEPSAQALELQGLGVDVYDQDVLEQGVLQQVDNAIHEASRASQLVDVEKEYRSVLDDLTSCTTSLRQINKIIEQLSPQAATSRDINRKLDSVKRQKYNKEQQLKKITAKQKHLQAILGGAEVKIELDHASLEEDAEPGPSSLGSMLMPVQETAWEELIRTGQMTPFGTQIPQKQEKKPRKIMLNEASGFEKYLADQAKLSFERKKQGCNKRAARKAPAPVTPPAPVQNKNKPNKKARVLSKKEERLKKHIKKLQKRALQFQGKVGLPKARRPWESDMRPEAEGDSEGEESEYFPTEEEEEEEDDEVEGAEADLSGDGTDYELKPLPKGGKRQKKVPVQEIDDDFFPSSGEEAEAASVGEGGGGGRKVGRYRDDGDEDYYKQRLSPKMPRTLSLHEITDLLETDDSIEASAIVIQPPENATAPVSDEESGDEEGGTINNLPGSLLHTAAYLIQDGSDAESDSDDPSYAPKDDSPDEVPSTFTVQQPPPSRRRKMTKILCKWKKADLTVQPVAGRVTAPPNDFFTVMRTPTEILELFLDDEVIELIVKYSNLYACSKGVHLGLTSSEFKCFLGIIFLSGYVSVPRRRMFWEQRTDVHNVLVSAAMRRDRFETIFSNLHVADNANLDPVDKFSKLRPLISKLNERCMKFVPNETYFSFDEFMVPYFGRHGCKQFIRGKPIRFGYKFWCGATCLGYICWFQPYQGKNPNTKHEEYGVGASLVLQFSEALTEAHPGQYHFVFNNFFTSIALLDKLSSMGHQATGTVRKDHIDRVPLESDVALKKKERGTFDYRIDGKGNIVCRWNDNSVVTVASSGAGIHPLCLVSRYSQKLKKKIQVQQPNMIKVYNQFMGGVDRADENIDKYRASIRGKKWYSSPLLFCFELVLQNAWQLHKTYDEKPVDFLEFRRRVVCHYLETHGHPPEPGQKGRPQKRNIDSRYDGINHVIVKQGKQTRCAECHKNTTFRCEKCDVALHVKCSVEYHTE.

Residues 1-39 are disordered; sequence MPNEGIPHSSQTQEQDCLQSQPVSNNEEMAIKQESGGDG. The segment covering 8-27 has biased composition (polar residues); the sequence is HSSQTQEQDCLQSQPVSNNE. Ser-158 is modified (phosphoserine). Lys-255 is covalently cross-linked (Glycyl lysine isopeptide (Lys-Gly) (interchain with G-Cter in SUMO2)). 4 disordered regions span residues 287 to 323, 344 to 466, 494 to 521, and 537 to 573; these read KQGC…VLSK, GKVG…QRLS, VIQP…INNL, and SDAE…SRRR. Over residues 353-363 the composition is skewed to basic and acidic residues; sequence RPWESDMRPEA. Over residues 364-392 the composition is skewed to acidic residues; it reads EGDSEGEESEYFPTEEEEEEEDDEVEGAE. Phosphoserine is present on residues Ser-429 and Ser-430. The span at 451–462 shows a compositional bias: basic and acidic residues; the sequence is RYRDDGDEDYYK. Positions 506–515 are enriched in acidic residues; the sequence is SDEESGDEEG. Ser-554 is modified (phosphoserine).

In terms of tissue distribution, expressed in heart and oocytes, but not in granulosa cells (at protein level).

It localises to the nucleus. Involved in repair of DNA damage following UV irradiation, acting either in the absence of ERCC6 or synergistically with ERCC6. Involved in the regulation of gene expression. In the absence of ERCC6, induces the expression of genes characteristic of interferon-like antiviral responses. This response is almost completely suppressed in the presence of ERCC6. In the presence of ERCC6, regulates the expression of genes involved in metabolism regulation, including IGFBP5 and IGFBP7. In vitro binds to PGBD3-related transposable elements, called MER85s; these non-autonomous 140 bp elements are characterized by the presence of PGBD3 terminal inverted repeats and the absence of internal transposase ORF. This chain is Chimeric ERCC6-PGBD3 protein, found in Homo sapiens (Human).